A 587-amino-acid chain; its full sequence is Vesicular glutamate transporter 2.2 (587 aa).

The Cytoplasmic portion of the chain corresponds to M1–Y71. A helical membrane pass occupies residues I72 to G92. The Vesicular portion of the chain corresponds to V93–V125. 2 N-linked (GlcNAc...) asparagine glycosylation sites follow: N100 and N101. A helical transmembrane segment spans residues G126 to I146. At S147–R149 the chain is on the cytoplasmic side. A helical membrane pass occupies residues L150–I170. The Vesicular portion of the chain corresponds to P171–C180. Residues V181–W203 traverse the membrane as a helical segment. Residues S204 to T217 lie on the Cytoplasmic side of the membrane. A helical membrane pass occupies residues T218–V238. Over Q239–S245 the chain is Vesicular. Residues V246 to Y266 traverse the membrane as a helical segment. The Cytoplasmic portion of the chain corresponds to E267–M311. Residues P312 to I332 form a helical membrane-spanning segment. Over S333–G350 the chain is Vesicular. Residues M351–A371 traverse the membrane as a helical segment. Over D372–K387 the chain is Cytoplasmic. The chain crosses the membrane as a helical span at residues I388–H408. Residues S409–K410 are Vesicular-facing. Residues G411–F431 traverse the membrane as a helical segment. At N432–S444 the chain is on the cytoplasmic side. Residues I445–V465 form a helical membrane-spanning segment. The Vesicular portion of the chain corresponds to G466–N479. A glycan (N-linked (GlcNAc...) asparagine) is linked at N471. Residues V480–S500 form a helical membrane-spanning segment. The Cytoplasmic portion of the chain corresponds to G501–S587.

It belongs to the major facilitator superfamily. Sodium/anion cotransporter family. VGLUT subfamily. As to expression, expressed in spinal cord.

It localises to the cytoplasmic vesicle. The protein resides in the secretory vesicle. It is found in the synaptic vesicle membrane. Its subcellular location is the membrane. The protein localises to the synapse. It localises to the synaptosome. The protein resides in the cell membrane. The enzyme catalyses L-glutamate(out) = L-glutamate(in). It catalyses the reaction 3 Na(+)(out) + phosphate(out) = 3 Na(+)(in) + phosphate(in). The catalysed reaction is phosphate(in) = phosphate(out). It carries out the reaction K(+)(in) + H(+)(out) = K(+)(out) + H(+)(in). The enzyme catalyses chloride(in) = chloride(out). With respect to regulation, chloride channel activity is allosterically activated by lumenal H(+) and Cl(-) leading to synaptic vesicles acidification. The L-glutamate transport activity is allosterically activated by lumenal H(+) and Cl(-). The allosteric requirement for H(+) efficiently prevents non-vesicular efflux across the plasma membrane. The L-glutamate uniporter activity exhibits a biphasic dependence on chloride concentration. Multifunctional transporter that transports L-glutamate as well as multiple ions such as chloride, proton, potassium, sodium and phosphate. At the synaptic vesicle membrane, mainly functions as a uniporter which transports preferentially L-glutamate but also, phosphate from the cytoplasm into synaptic vesicles at presynaptic nerve terminals of excitatory neural cells. The L-glutamate or phosphate uniporter activity is electrogenic and is driven by the proton electrochemical gradient, mainly by the electrical gradient established by the vacuolar H(+)-ATPase across the synaptic vesicle membrane. In addition, functions as a chloride channel that allows a chloride permeation through the synaptic vesicle membrane therefore affects the proton electrochemical gradient and promotes synaptic vesicles acidification. Moreover, functions as a vesicular K(+)/H(+) antiport allowing to maintain the electrical gradient and to decrease chemical gradient and therefore sustain vesicular L-glutamate uptake. The vesicular H(+)/H(+) antiport activity is electroneutral. At the plasma membrane, following exocytosis, functions as a symporter of Na(+) and phosphate from the extracellular space to the cytoplasm allowing synaptic phosphate homeostasis regulation. The symporter activity is driven by an inside negative membrane potential and is electrogenic. Also involved in the regulation of retinal hyaloid vessel regression during postnatal development. May also play a role in the endocrine L-glutamatergic system of other tissues such as pineal gland and pancreas. The sequence is that of Vesicular glutamate transporter 2.2 (slc17a6a) from Danio rerio (Zebrafish).